Reading from the N-terminus, the 170-residue chain is Peptide deformylase (170 aa).

Residues C94 and H136 each coordinate Fe cation. E137 is a catalytic residue. H140 is a Fe cation binding site.

This sequence belongs to the polypeptide deformylase family. It depends on Fe(2+) as a cofactor.

It carries out the reaction N-terminal N-formyl-L-methionyl-[peptide] + H2O = N-terminal L-methionyl-[peptide] + formate. Its function is as follows. Removes the formyl group from the N-terminal Met of newly synthesized proteins. Requires at least a dipeptide for an efficient rate of reaction. N-terminal L-methionine is a prerequisite for activity but the enzyme has broad specificity at other positions. This is Peptide deformylase from Agrobacterium fabrum (strain C58 / ATCC 33970) (Agrobacterium tumefaciens (strain C58)).